The chain runs to 188 residues: HTH-type transcriptional repressor AcnR (188 aa).

The region spanning 10–70 (TNSRQEILEG…ALAREDAARM (61 aa)) is the HTH tetR-type domain. Residues 33–52 (TVRRLEEATGKSRGAIFHHF) constitute a DNA-binding region (H-T-H motif). Citrate contacts are provided by residues 79–80 (LV), R130, and N134. A Mg(2+)-binding site is contributed by E181. R185 contributes to the citrate binding site.

As to quaternary structure, homodimer.

Its function is as follows. AcnR negatively controls the expression of the aconitase gene acn. Binds to the imperfect inverted repeat in the acn promoter region. In Corynebacterium glutamicum (strain ATCC 13032 / DSM 20300 / JCM 1318 / BCRC 11384 / CCUG 27702 / LMG 3730 / NBRC 12168 / NCIMB 10025 / NRRL B-2784 / 534), this protein is HTH-type transcriptional repressor AcnR.